Consider the following 209-residue polypeptide: Cytidylate kinase (209 aa).

An ATP-binding site is contributed by 7 to 15; it reads GPAASGKGT.

The protein belongs to the cytidylate kinase family. Type 1 subfamily.

Its subcellular location is the cytoplasm. The catalysed reaction is CMP + ATP = CDP + ADP. It carries out the reaction dCMP + ATP = dCDP + ADP. This is Cytidylate kinase from Afipia carboxidovorans (strain ATCC 49405 / DSM 1227 / KCTC 32145 / OM5) (Oligotropha carboxidovorans).